We begin with the raw amino-acid sequence, 633 residues long: DNA mismatch repair protein MutL (633 aa).

Disordered regions lie at residues 337 to 364 (RPDD…GEFG) and 383 to 405 (VGWS…TRPE). Positions 385 to 396 (WSGGSSASGGSS) are enriched in gly residues.

It belongs to the DNA mismatch repair MutL/HexB family.

This protein is involved in the repair of mismatches in DNA. It is required for dam-dependent methyl-directed DNA mismatch repair. May act as a 'molecular matchmaker', a protein that promotes the formation of a stable complex between two or more DNA-binding proteins in an ATP-dependent manner without itself being part of a final effector complex. In Pseudomonas aeruginosa (strain LESB58), this protein is DNA mismatch repair protein MutL.